The sequence spans 444 residues: E1B 55 kDa protein (444 aa).

Residues 1–27 (MEQDSDLESGRATNQRPPRVRVRGAGV) are disordered. 2 positions are modified to phosphoserine: Ser-438 and Ser-439.

The protein belongs to the adenoviridae E1B 55 kDa protein family. As to quaternary structure, interacts with host PML-4 and PML-5; this interaction promotes efficient subnuclear targeting of E1B-55K to PML nuclear bodies. Interacts with E4-ORF3 protein. Interacts with E4-ORF6 protein.

The protein resides in the host nucleus. It localises to the host cytoplasm. Functionally, plays a major role to prevent cellular inhibition of viral genome replication. Assembles an SCF-like E3 ubiquitin ligase complex based on the cellular proteins ELOB, ELOC, CUL5 and RBX1, in cooperation with viral E4orf6. This viral RING-type ligase ubiquitinates cellular substrates and targets them to proteasomal degradation: TP53/p53, LIG4, MRE11-RAD50-NBS1 (MRN) complex, ITGA3, DAXX and BLM. E1B-55K probably acts as the substrate-specific adapter of the SCF-like E3 ubiquitin ligase complex. Degradation of host TP53/p53 activity is essential for preventing E1A-induced TP53 accumulation that would otherwise lead to cell apoptosis and growth arrest. E1B-55K also inactivates TP53 transcription-factor activity by binding its transactivation domain. E1B-55K also functions as a SUMO1 E3 ligase for TP53 which causes the latter to be sequestered in promyelocytic leukemia (PML) nuclear bodies thereby contributing to maximal inhibition of TP53 function. In Canis lupus familiaris (Dog), this protein is E1B 55 kDa protein.